The chain runs to 404 residues: Caspase-1 (404 aa).

The CARD domain maps to 1-91 (MADKVLKEKR…YLAGTLGLSA (91 aa)). The propeptide occupies 1-119 (MADKVLKEKR…SFPAPQAVQD (119 aa)). K134 participates in a covalent cross-link: Glycyl lysine isopeptide (Lys-Gly) (interchain with G-Cter in ubiquitin). Residues H237 and C285 contribute to the active site. The propeptide at 298-316 (SVGVSGNLSLPTTEEFEDD) is interdomain linker. The residue at position 302 (S302) is a Phosphoserine.

The protein belongs to the peptidase C14A family. Heterotetramer that consists of two anti-parallel arranged heterodimers, each one formed by a 20 kDa (Caspase-1 subunit p20) and a 10 kDa (Caspase-1 subunit p10) subunit. May be a component of the inflammasome, a protein complex which also includes PYCARD, CARD8 and NLRP2 and whose function would be the activation of pro-inflammatory caspases. Component of the AIM2 PANoptosome complex, a multiprotein complex that drives inflammatory cell death (PANoptosis). Interacts with CARD8; interacts with the released C-terminus of CARD8 which forms an inflammasome and directly activates CASP1 to promote pyroptosis. Both the p10 and p20 subunits interact with MEFV. Interacts with CARD17P/INCA and CARD18. Interacts with SERPINB1; this interaction regulates CASP1 activity. In terms of assembly, heterotetramer that consists of two anti-parallel arranged heterodimers, each one formed by a 20 kDa (Caspase-1 subunit p20) and a 10 kDa (Caspase-1 subunit p10) subunit. Can form a heterodimer with isoform epsilon which then has an inhibitory effect. As to quaternary structure, heterotetramer that consists of two anti-parallel arranged heterodimers, each one formed by a 20 kDa (Caspase-1 subunit p20) and a 10 kDa (Caspase-1 subunit p10) subunit. Can form a heterodimer with Caspase-1 subunit p20 which then has an inhibitory effect. Post-translationally, the two subunits are derived from the precursor sequence by an autocatalytic mechanism. In terms of processing, ubiquitinated via 'Lys-11'-linked polyubiquitination. Deubiquitinated by USP8. Cleavage in the interdomain linker region is required to induce pyroptosis. In terms of tissue distribution, expressed in larger amounts in spleen and lung. Detected in liver, heart, small intestine, colon, thymus, prostate, skeletal muscle, peripheral blood leukocytes, kidney and testis. No expression in the brain.

The protein resides in the cytoplasm. It is found in the cell membrane. The catalysed reaction is Strict requirement for an Asp residue at position P1 and has a preferred cleavage sequence of Tyr-Val-Ala-Asp-|-.. With respect to regulation, (Microbial infection) Specifically inhibited by the cowpox virus Crma protein. In terms of biological role, thiol protease involved in a variety of inflammatory processes by proteolytically cleaving other proteins, such as the precursors of the inflammatory cytokines interleukin-1 beta (IL1B) and interleukin 18 (IL18) as well as the pyroptosis inducer Gasdermin-D (GSDMD), into active mature peptides. Plays a key role in cell immunity as an inflammatory response initiator: once activated through formation of an inflammasome complex, it initiates a pro-inflammatory response through the cleavage of the two inflammatory cytokines IL1B and IL18, releasing the mature cytokines which are involved in a variety of inflammatory processes. Cleaves a tetrapeptide after an Asp residue at position P1. Also initiates pyroptosis, a programmed lytic cell death pathway, through cleavage of GSDMD. In contrast to cleavage of interleukin IL1B, recognition and cleavage of GSDMD is not strictly dependent on the consensus cleavage site but depends on an exosite interface on CASP1 that recognizes and binds the Gasdermin-D, C-terminal (GSDMD-CT) part. Cleaves and activates CASP7 in response to bacterial infection, promoting plasma membrane repair. Upon inflammasome activation, during DNA virus infection but not RNA virus challenge, controls antiviral immunity through the cleavage of CGAS, rendering it inactive. In apoptotic cells, cleaves SPHK2 which is released from cells and remains enzymatically active extracellularly. Apoptosis inactive. This is Caspase-1 (CASP1) from Homo sapiens (Human).